Here is a 947-residue protein sequence, read N- to C-terminus: Beta-glucosidase (947 aa).

Asp-696 is an active-site residue.

The protein belongs to the glycosyl hydrolase 3 family.

It carries out the reaction Hydrolysis of terminal, non-reducing beta-D-glucosyl residues with release of beta-D-glucose.. It functions in the pathway glycan metabolism; cellulose degradation. The chain is Beta-glucosidase from Ruminococcus albus.